Consider the following 443-residue polypeptide: Na(+)-translocating ferredoxin:NAD(+) oxidoreductase complex subunit C (443 aa).

2 consecutive 4Fe-4S ferredoxin-type domains span residues glutamate 359–tyrosine 391 and aspartate 398–isoleucine 428. Residues cysteine 369, cysteine 372, cysteine 375, cysteine 379, cysteine 408, cysteine 411, cysteine 414, and cysteine 418 each contribute to the [4Fe-4S] cluster site.

This sequence belongs to the 4Fe4S bacterial-type ferredoxin family. RnfC subfamily. The complex is composed of six subunits: RnfA, RnfB, RnfC, RnfD, RnfE and RnfG. [4Fe-4S] cluster is required as a cofactor.

It localises to the cell membrane. It carries out the reaction 2 reduced [2Fe-2S]-[ferredoxin] + Na(+)(in) + NAD(+) + H(+) = 2 oxidized [2Fe-2S]-[ferredoxin] + Na(+)(out) + NADH. Its function is as follows. Part of a membrane-bound complex that couples electron transfer with translocation of ions across the membrane. Couples electron transfer from reduced ferredoxin to NAD(+) with electrogenic movement of Na(+) out of the cell. Involved in caffeate respiration. This is Na(+)-translocating ferredoxin:NAD(+) oxidoreductase complex subunit C from Acetobacterium woodii (strain ATCC 29683 / DSM 1030 / JCM 2381 / KCTC 1655 / WB1).